Reading from the N-terminus, the 261-residue chain is Triosephosphate isomerase (261 aa).

10 to 12 (NWK) is a substrate binding site. H100 acts as the Electrophile in catalysis. E172 (proton acceptor) is an active-site residue. Substrate is bound by residues G178, S218, and 239-240 (GG).

It belongs to the triosephosphate isomerase family. Homodimer.

The protein resides in the cytoplasm. It catalyses the reaction D-glyceraldehyde 3-phosphate = dihydroxyacetone phosphate. It participates in carbohydrate biosynthesis; gluconeogenesis. The protein operates within carbohydrate degradation; glycolysis; D-glyceraldehyde 3-phosphate from glycerone phosphate: step 1/1. In terms of biological role, involved in the gluconeogenesis. Catalyzes stereospecifically the conversion of dihydroxyacetone phosphate (DHAP) to D-glyceraldehyde-3-phosphate (G3P). The polypeptide is Triosephosphate isomerase (Mycobacterium tuberculosis (strain CDC 1551 / Oshkosh)).